Here is a 428-residue protein sequence, read N- to C-terminus: Enolase 1 (428 aa).

The segment at 38–58 (EVPSGASTGENEAVELRDGGS) is disordered. Q163 is a (2R)-2-phosphoglycerate binding site. E205 functions as the Proton donor in the catalytic mechanism. Positions 242, 286, and 313 each coordinate Mg(2+). (2R)-2-phosphoglycerate contacts are provided by K338, R367, S368, and K389. The active-site Proton acceptor is K338.

Belongs to the enolase family. It depends on Mg(2+) as a cofactor.

The protein resides in the cytoplasm. Its subcellular location is the secreted. The protein localises to the cell surface. It carries out the reaction (2R)-2-phosphoglycerate = phosphoenolpyruvate + H2O. The protein operates within carbohydrate degradation; glycolysis; pyruvate from D-glyceraldehyde 3-phosphate: step 4/5. In terms of biological role, catalyzes the reversible conversion of 2-phosphoglycerate (2-PG) into phosphoenolpyruvate (PEP). It is essential for the degradation of carbohydrates via glycolysis. The chain is Enolase 1 from Lactobacillus gasseri (strain ATCC 33323 / DSM 20243 / BCRC 14619 / CIP 102991 / JCM 1131 / KCTC 3163 / NCIMB 11718 / NCTC 13722 / AM63).